The sequence spans 717 residues: MTILQLFLVFLNILEALCDYQLPKPRINKPPAEERLKLRNGYNTTLIEFDDGVQSFNLNWTKIIEHIPHDELIELWREANVTEPLVNTLLKRSDTYRPETNVHIPGHGNSYACALPYWSYTIDQWEDNKTTGYLGNFGIPSKTVLNEFFYDFQYVYTNRQFYTEATYVLNCLIGATTPAYPTISCHITPNYLFVSVEFTKFDSLTLLFGHSHYLPPLKGHIVYNDIEGASNDVFSLVIFSTYDLFGKHVESFKFDIAKVFREIIETPPLTFIKNLQDEMFTIEIRDGCNINNIVNPKTFLFAFKAVVAHFLVIDSLRTQQHILLNCFANYMSELEFLRKLMESCFEFFEFDFPYTVIETLAASQALNVPKHVITSLSHQDKTNMLSLFRLSRHSKHVSAVAISEIIDLISHIYTAYSYTYMLTSSERKMLLDAYIVLNDIMHKNETVKKQDLLPYVLSSSMCTSLEIGNLLLHFGQKDVLDVYETFSPCYLSLRFDFTKEKLITEFPQSSLIAQKEINLGTNGFFQTLHMRHHTSLEILPIIKCIKSLSTDIILSIPLKNITYVISTKPVPNSKIYDVSEVFLKTSMIISAVNNDCKPYQGGSAAHQIPVIYNVTVPRRGCPYCSSVVLSYDESQGFQSMMYITDTYVQENLFTEHSPFFGDGNLHIHYLILMNNGTVIEVRGAYRARLVNFIIVIMVFILFLVGLYLLYKLFVYLT.

A signal peptide spans 1-18 (MTILQLFLVFLNILEALC). Over 19 to 693 (DYQLPKPRIN…AYRARLVNFI (675 aa)) the chain is Virion surface. Residues Asn-43, Asn-59, Asn-80, and Asn-128 are each glycosylated (N-linked (GlcNAc...) asparagine; by host). Residues 177-239 (TPAYPTISCH…SNDVFSLVIF (63 aa)) are interaction with gL. N-linked (GlcNAc...) asparagine; by host glycosylation is found at Asn-444, Asn-560, Asn-613, and Asn-675. Residues 694–714 (IVIMVFILFLVGLYLLYKLFV) form a helical membrane-spanning segment. The Intravirion portion of the chain corresponds to 715-717 (YLT).

It belongs to the herpesviridae glycoprotein H family. Interacts with glycoprotein L (gL); this interaction is necessary for the correct processing and cell surface expression of gH. The heterodimer gH/gL seems to interact with gB trimers during fusion. N-glycosylated, O-glycosylated, and sialylated.

It localises to the virion membrane. The protein resides in the host cell membrane. The protein localises to the host endosome membrane. The heterodimer glycoprotein H-glycoprotein L is required for the fusion of viral and plasma membranes leading to virus entry into the host cell. Following initial binding to host receptor, membrane fusion is mediated by the fusion machinery composed of gB and the heterodimer gH/gL. May also be involved in the fusion between the virion envelope and the outer nuclear membrane during virion morphogenesis. The sequence is that of Envelope glycoprotein H from Saimiriine herpesvirus 2 (strain 11) (SaHV-2).